We begin with the raw amino-acid sequence, 85 residues long: uncharacterized protein (85 aa).

It belongs to the herpesviridae UL91 family.

This is an uncharacterized protein from Alcelaphine herpesvirus 1 (strain C500) (AlHV-1).